We begin with the raw amino-acid sequence, 94 residues long: Long neurotoxin LNTX37 (94 aa).

A signal peptide spans 1–21 (MKTLLLTLVVVTIMCLDLGYT). 5 disulfide bridges follow: Cys-24/Cys-43, Cys-36/Cys-64, Cys-49/Cys-53, Cys-68/Cys-79, and Cys-80/Cys-85.

The protein belongs to the three-finger toxin family. Long-chain subfamily. Type II alpha-neurotoxin sub-subfamily. In terms of tissue distribution, expressed by the venom gland.

The protein resides in the secreted. Binds with high affinity to muscular (alpha-1/CHRNA1) and neuronal (alpha-7/CHRNA7) nicotinic acetylcholine receptor (nAChR) and inhibits acetylcholine from binding to the receptor, thereby impairing neuromuscular and neuronal transmission. The sequence is that of Long neurotoxin LNTX37 from Ophiophagus hannah (King cobra).